A 54-amino-acid polypeptide reads, in one-letter code: U7-ctenitoxin-Pk1a (54 aa).

5 disulfides stabilise this stretch: C3–C17, C10–C23, C14–C52, C16–C37, and C25–C35.

In terms of tissue distribution, expressed by the venom gland.

It is found in the secreted. In terms of biological role, blocks voltage-gated sodium channels (Nav). Causes immediate spastic paralysis and death in mice within 1 minute of injection at dose levels of 1.5 ug per mouse. The chain is U7-ctenitoxin-Pk1a from Phoneutria keyserlingi (Brazilian wandering spider).